We begin with the raw amino-acid sequence, 988 residues long: DExH-box ATP-dependent RNA helicase DExH9 (988 aa).

Positions 1–27 (MGSVKRKSVEESSDSAPPQKVQREDDS) are disordered. The Helicase ATP-binding domain maps to 76–232 (IKCLDNGESV…WVAKVHQQPC (157 aa)). 89–96 (AHTSAGKT) contacts ATP. A DEVH box motif is present at residues 180–183 (DEVH). A Helicase C-terminal domain is found at 307-509 (DIFKLVKMII…SYNMLLNQLR (203 aa)).

It belongs to the DExH box helicase family. SKI2 subfamily. In terms of tissue distribution, ubiquitous but preferentially expressed in active tissues.

Its subcellular location is the nucleus. The protein localises to the nucleolus. It carries out the reaction ATP + H2O = ADP + phosphate + H(+). Functionally, ATP-dependent RNA helicase that associates with the RNA exosome complex. Required for proper rRNA biogenesis and development. Involved in the 3'-processing of the 7S pre-RNA to the mature 5.8S rRNA and also in the removal of rRNA maturation by-products. This Arabidopsis thaliana (Mouse-ear cress) protein is DExH-box ATP-dependent RNA helicase DExH9.